A 2123-amino-acid chain; its full sequence is Toxin Afp18 (2123 aa).

The interval 864 to 919 (FFDNSDQDADQPRVRRKREMTDEIMLSDGSSRSEAKALPDENELDTDQSKSRPESA) is disordered. The tract at residues 1771-2123 (VFDSANTNRS…GNSTQSSGLS (353 aa)) is tyrosine glycosyltransferase. Residues 1850–1852 (IWV) and 1940–1941 (SD) contribute to the UDP-N-acetyl-alpha-D-glucosamine site. Positions 1957 and 1959 each coordinate a divalent metal cation. Residues 1957–1960 (DIDD) carry the DxDD motif motif. A UDP-N-acetyl-alpha-D-glucosamine-binding site is contributed by asparagine 1993.

It depends on a divalent metal cation as a cofactor.

It localises to the secreted. Its subcellular location is the host cell membrane. It carries out the reaction L-tyrosyl-[protein] + UDP-N-acetyl-alpha-D-glucosamine = O-(N-acetyl-alpha-D-glucosaminyl)-L-tyrosyl-[protein] + UDP + H(+). In terms of biological role, toxin component of the prophage tail-derived protein translocation system Afp, which is the causative agent of enteric redmouth disease in salmonid fish species. Mono-O-GlcNAcylates the small GTPase RhoA in eukaryotic host cells at Tyr-34, using UDP-N-acetylglucosamine (UDP-GlcNAc) as the sugar donor. Glycosylation of RhoA results in impaired effector and regulator interaction and inactivation of downstream RhoA signaling which leads to actin filament depolymerization and blocks cytokinesis and gastrulation during zebrafish embryo development. To a lesser extent, is also able to glycosylate other Rho family GTPases (RhoB, RhoC, Rac1, Rac2, Rac3, and Cdc42) in vitro at a switch I tyrosine residue, but not Ras proteins. This Yersinia ruckeri serotype O1 (strain ATCC 29473 / DSM 18506 / JCM 15110 / CCUG 14190 / NCIMB 2194 / NCTC 12986 / 2396-61) protein is Toxin Afp18.